The following is a 485-amino-acid chain: Glutamyl-tRNA(Gln) amidotransferase subunit A (485 aa).

Residues lysine 78 and serine 153 each act as charge relay system in the active site. The Acyl-ester intermediate role is filled by serine 177.

It belongs to the amidase family. GatA subfamily. As to quaternary structure, heterotrimer of A, B and C subunits.

The catalysed reaction is L-glutamyl-tRNA(Gln) + L-glutamine + ATP + H2O = L-glutaminyl-tRNA(Gln) + L-glutamate + ADP + phosphate + H(+). In terms of biological role, allows the formation of correctly charged Gln-tRNA(Gln) through the transamidation of misacylated Glu-tRNA(Gln) in organisms which lack glutaminyl-tRNA synthetase. The reaction takes place in the presence of glutamine and ATP through an activated gamma-phospho-Glu-tRNA(Gln). This Bacillus cereus (strain ZK / E33L) protein is Glutamyl-tRNA(Gln) amidotransferase subunit A.